Consider the following 353-residue polypeptide: Basic membrane protein C (353 aa).

An N-terminal signal peptide occupies residues 1–16 (MFKRFIFITLSLLVFA). Cysteine 17 carries the N-palmitoyl cysteine lipid modification. Cysteine 17 carries the S-diacylglycerol cysteine lipid modification.

Belongs to the BMP lipoprotein family. In terms of assembly, monomer.

Its subcellular location is the cell inner membrane. Functionally, may be part of an ABC-type nucleoside uptake system involved in the purine salvage pathway. This is Basic membrane protein C (bmpC) from Borreliella burgdorferi (strain ATCC 35210 / DSM 4680 / CIP 102532 / B31) (Borrelia burgdorferi).